The following is a 262-amino-acid chain: CD99 antigen-like protein 2 (262 aa).

Positions 1–25 are cleaved as a signal peptide; the sequence is MVAWRSAFLVCLAFSLATLVQRGSG. The Extracellular segment spans residues 26–185; the sequence is DFDDFNLEDA…PGSGMVAEPG (160 aa). The segment at 38–181 is disordered; that stretch reads ETSSVKQPWD…SNDDPGSGMV (144 aa). Composition is skewed to low complexity over residues 49-60 and 98-119; these read TTTTTTNRPGTT and VTTT…GNDF. Basic and acidic residues-rich tracts occupy residues 125–136 and 159–168; these read LDDRNDRDDGRR and YKPDKGKGDG. An O-linked (Xyl...) (chondroitin sulfate) serine glycan is attached at serine 178. The chain crosses the membrane as a helical span at residues 186-206; the sequence is TIAGVASALAMALIGAVSSYI. The Cytoplasmic segment spans residues 207-262; the sequence is SYQQKKFCFSIQQGLNADYVKGENLEAVVCEEPQVKYSTLHTQSAEPPPPPEPARI.

The protein belongs to the CD99 family. In terms of processing, O-glycosylated. In terms of tissue distribution, detected in cerebrospinal fluid (at protein level). Expressed in many tissues, with low expression in thymus.

The protein localises to the cell membrane. The protein resides in the cell junction. It localises to the secreted. In terms of biological role, plays a role in a late step of leukocyte extravasation helping cells to overcome the endothelial basement membrane. Acts at the same site as, but independently of, PECAM1. Homophilic adhesion molecule, but these interactions may not be required for cell aggregation. The sequence is that of CD99 antigen-like protein 2 (CD99L2) from Homo sapiens (Human).